The following is a 423-amino-acid chain: AP-1 complex subunit mu-1 (423 aa).

Serine 2 bears the N-acetylserine mark. Residues threonine 152, threonine 154, and threonine 223 each carry the phosphothreonine modification. Residues 168-421 (KNEVFLDVIE…ITQNGDYQLR (254 aa)) form the MHD domain.

Belongs to the adaptor complexes medium subunit family. Adaptor protein complex 1 (AP-1) is a heterotetramer composed of two large adaptins (gamma-type subunit AP1G1 and beta-type subunit AP1B1), a medium adaptin (mu-type subunit AP1M1 or AP1M2) and a small adaptin (sigma-type subunit AP1S1 or AP1S2 or AP1S3). Interacts with MARCHF11. In terms of processing, phosphorylation of membrane-bound AP1M1/AP1M2 increases its affinity for sorting signals.

It is found in the cytoplasmic vesicle. It localises to the clathrin-coated vesicle membrane. The protein localises to the golgi apparatus. Functionally, subunit of clathrin-associated adaptor protein complex 1 that plays a role in protein sorting in the trans-Golgi network (TGN) and endosomes. The AP complexes mediate the recruitment of clathrin to membranes and the recognition of sorting signals within the cytosolic tails of transmembrane cargo molecules. This chain is AP-1 complex subunit mu-1, found in Bos taurus (Bovine).